A 121-amino-acid polypeptide reads, in one-letter code: Small ribosomal subunit protein uS13 (121 aa).

Residues 91–121 (HRRGLPVRGQNSKNNARTRKGPRRTVANKKK) form a disordered region. A compositionally biased stretch (basic residues) spans 106-121 (ARTRKGPRRTVANKKK).

This sequence belongs to the universal ribosomal protein uS13 family. In terms of assembly, part of the 30S ribosomal subunit. Forms a loose heterodimer with protein S19. Forms two bridges to the 50S subunit in the 70S ribosome.

Its function is as follows. Located at the top of the head of the 30S subunit, it contacts several helices of the 16S rRNA. In the 70S ribosome it contacts the 23S rRNA (bridge B1a) and protein L5 of the 50S subunit (bridge B1b), connecting the 2 subunits; these bridges are implicated in subunit movement. Contacts the tRNAs in the A and P-sites. The polypeptide is Small ribosomal subunit protein uS13 (Bacillus mycoides (strain KBAB4) (Bacillus weihenstephanensis)).